Reading from the N-terminus, the 434-residue chain is Mitochondrial distribution and morphology protein 12 (434 aa).

Positions 1–434 (MSIDIDWERA…VYPSFWTFLV (434 aa)) constitute an SMP-LTD domain. The span at 70–83 (YEEDDNENFSESSE) shows a compositional bias: acidic residues. Disordered regions lie at residues 70 to 141 (YEED…LRSP) and 181 to 277 (TPLG…LPPR). Basic and acidic residues predominate over residues 86-97 (SPTREPVDRYGS). The segment covering 215–237 (SAQSRPSTANTGNTLLSRGSMSS) has biased composition (polar residues).

The protein belongs to the MDM12 family. In terms of assembly, component of the ER-mitochondria encounter structure (ERMES) or MDM complex, composed of MMM1, MDM10, MDM12 and MDM34. An MMM1 homodimer associates with one molecule of MDM12 on each side in a pairwise head-to-tail manner, and the SMP-LTD domains of MMM1 and MDM12 generate a continuous hydrophobic tunnel for phospholipid trafficking.

The protein resides in the mitochondrion outer membrane. It is found in the endoplasmic reticulum membrane. Its function is as follows. Component of the ERMES/MDM complex, which serves as a molecular tether to connect the endoplasmic reticulum (ER) and mitochondria. Components of this complex are involved in the control of mitochondrial shape and protein biogenesis, and function in nonvesicular lipid trafficking between the ER and mitochondria. MDM12 is required for the interaction of the ER-resident membrane protein MMM1 and the outer mitochondrial membrane-resident beta-barrel protein MDM10. The MDM12-MMM1 subcomplex functions in the major beta-barrel assembly pathway that is responsible for biogenesis of all mitochondrial outer membrane beta-barrel proteins, and acts in a late step after the SAM complex. The MDM10-MDM12-MMM1 subcomplex further acts in the TOM40-specific pathway after the action of the MDM12-MMM1 complex. Essential for establishing and maintaining the structure of mitochondria and maintenance of mtDNA nucleoids. The chain is Mitochondrial distribution and morphology protein 12 from Ajellomyces dermatitidis (strain ER-3 / ATCC MYA-2586) (Blastomyces dermatitidis).